A 167-amino-acid polypeptide reads, in one-letter code: Ureidoglycolate lyase (167 aa).

This sequence belongs to the ureidoglycolate lyase family. Homodimer. It depends on Ni(2+) as a cofactor.

It catalyses the reaction (S)-ureidoglycolate = urea + glyoxylate. It participates in nitrogen metabolism; (S)-allantoin degradation. Functionally, catalyzes the catabolism of the allantoin degradation intermediate (S)-ureidoglycolate, generating urea and glyoxylate. Involved in the utilization of allantoin as nitrogen source. This Pseudomonas putida (strain ATCC 700007 / DSM 6899 / JCM 31910 / BCRC 17059 / LMG 24140 / F1) protein is Ureidoglycolate lyase.